The chain runs to 36 residues: Photosystem I reaction center subunit VIII (36 aa).

The helical transmembrane segment at 9 to 29 (ILVPLVGLVFPAVTMASLFLY) threads the bilayer.

Belongs to the PsaI family.

It is found in the plastid. The protein resides in the chloroplast thylakoid membrane. In terms of biological role, may help in the organization of the PsaL subunit. The chain is Photosystem I reaction center subunit VIII from Staurastrum punctulatum (Green alga).